Here is a 115-residue protein sequence, read N- to C-terminus: Holo-[acyl-carrier-protein] synthase (115 aa).

2 residues coordinate Mg(2+): D8 and E50.

The protein belongs to the P-Pant transferase superfamily. AcpS family. Requires Mg(2+) as cofactor.

Its subcellular location is the cytoplasm. It carries out the reaction apo-[ACP] + CoA = holo-[ACP] + adenosine 3',5'-bisphosphate + H(+). Functionally, transfers the 4'-phosphopantetheine moiety from coenzyme A to a Ser of acyl-carrier-protein. This chain is Holo-[acyl-carrier-protein] synthase, found in Cutibacterium acnes (strain DSM 16379 / KPA171202) (Propionibacterium acnes).